The primary structure comprises 437 residues: Sodium/bile acid cotransporter 4 (437 aa).

The Extracellular segment spans residues 1 to 103 (MDGNDNVTLL…LPFWDTPLNH (103 aa)). Residues asparagine 6, asparagine 18, and asparagine 24 are each glycosylated (N-linked (GlcNAc...) asparagine). Residues 37-82 (APASSAGPGPGLSLGPGPSFGFSPGPTPTPEPTTSGLAGGAASHGP) form a disordered region. Positions 51-60 (GPGPSFGFSP) are enriched in low complexity. A helical membrane pass occupies residues 104 to 124 (GLNVFVGAALCITMLGLGCTV). The Cytoplasmic portion of the chain corresponds to 125–140 (DVNHFGAHVRRPVGAL). Residues 141 to 161 (LAALCQFGLLPLLAFLLALAF) traverse the membrane as a helical segment. Over 162-197 (KLDEVAAVAVLLCGCCPGGNLSNLMSLLVDGDMNLS) the chain is Extracellular. N-linked (GlcNAc...) asparagine glycosylation is found at asparagine 181 and asparagine 195. A helical transmembrane segment spans residues 198–218 (IIMTISSTLLALVLMPLCLWI). The Cytoplasmic portion of the chain corresponds to 219-233 (YSWAWINTPIVQLLP). Residues 234–254 (LGTVTLTLCSTLIPIGLGVFI) traverse the membrane as a helical segment. Topologically, residues 255 to 267 (RYKYSRVADYIVK) are extracellular. A helical transmembrane segment spans residues 268–288 (VSLWSLLVTLVVLFIMTGTML). At 289–291 (GPE) the chain is on the cytoplasmic side. The helical transmembrane segment at 292 to 312 (LLASIPAAVYVIAIFMPLAGY) threads the bilayer. Over 313-360 (ASGYGLATLFHLPPNCKRTVCLETGSQNVQLCTAILKLAFPPQFIGSM) the chain is Extracellular. The chain crosses the membrane as a helical span at residues 361–381 (YMFPLLYALFQSAEAGIFVLI). The Cytoplasmic segment spans residues 382 to 437 (YKMYGSEMLHKRDPLDEDEDTDISYKKLKEEEMADTSYGTVKAENIIMMETAQTSL).

This sequence belongs to the bile acid:sodium symporter (BASS) (TC 2.A.28) family. Activated following N-terminal proteolytic cleavage by thrombin and/or proteases. In terms of tissue distribution, highly expressed in brain and small intestine, and moderately expressed in colon, heart, prostate, and testis. Very low levels were detected in kidney, liver, ovary, placenta, spleen, and thymus.

The protein resides in the cell membrane. Functionally, transporter for bile acids. The polypeptide is Sodium/bile acid cotransporter 4 (SLC10A4) (Homo sapiens (Human)).